We begin with the raw amino-acid sequence, 354 residues long: Uptake hydrogenase small subunit (354 aa).

Positions 1-44 (MSQLETXYDVMRRQGITRRSFLKYCSLTGRPCLGPTFAPQIAHA) form a signal peptide, tat-type signal. [4Fe-4S] cluster-binding residues include cysteine 61, cysteine 64, cysteine 156, cysteine 190, histidine 228, serine 231, cysteine 256, and cysteine 262. The [3Fe-4S] cluster site is built by cysteine 271, cysteine 290, and cysteine 293.

Belongs to the [NiFe]/[NiFeSe] hydrogenase small subunit family. In terms of assembly, heterodimer of a large and a small subunit. [4Fe-4S] cluster is required as a cofactor. Requires [3Fe-4S] cluster as cofactor. Post-translationally, predicted to be exported by the Tat system. The position of the signal peptide cleavage has not been experimentally proven.

It localises to the cell membrane. The enzyme catalyses H2 + A = AH2. This enzyme recycles the H(2) produced by nitrogenase to increase the production of ATP and to protect nitrogenase against inhibition or damage by O(2) under carbon- or phosphate-limited conditions. This chain is Uptake hydrogenase small subunit (hupA), found in Azotobacter chroococcum mcd 1.